We begin with the raw amino-acid sequence, 514 residues long: 2-isopropylmalate synthase (514 aa).

A Pyruvate carboxyltransferase domain is found at 5–267; it reads IYIFDTTLRD…HTDIVTEEIT (263 aa). The Mn(2+) site is built by D14, H202, H204, and N238. Residues 392 to 514 are regulatory domain; it reads KLKYYQVFTG…SKDLQKISAN (123 aa).

Belongs to the alpha-IPM synthase/homocitrate synthase family. LeuA type 1 subfamily. Homodimer. Mn(2+) serves as cofactor.

Its subcellular location is the cytoplasm. The catalysed reaction is 3-methyl-2-oxobutanoate + acetyl-CoA + H2O = (2S)-2-isopropylmalate + CoA + H(+). The protein operates within amino-acid biosynthesis; L-leucine biosynthesis; L-leucine from 3-methyl-2-oxobutanoate: step 1/4. Catalyzes the condensation of the acetyl group of acetyl-CoA with 3-methyl-2-oxobutanoate (2-ketoisovalerate) to form 3-carboxy-3-hydroxy-4-methylpentanoate (2-isopropylmalate). This chain is 2-isopropylmalate synthase, found in Clostridium kluyveri (strain NBRC 12016).